The sequence spans 245 residues: Ribosomal RNA large subunit methyltransferase E (245 aa).

Positions 83, 85, 111, 127, and 156 each coordinate S-adenosyl-L-methionine. Catalysis depends on K196, which acts as the Proton acceptor.

It belongs to the class I-like SAM-binding methyltransferase superfamily. RNA methyltransferase RlmE family.

It is found in the cytoplasm. The catalysed reaction is uridine(2552) in 23S rRNA + S-adenosyl-L-methionine = 2'-O-methyluridine(2552) in 23S rRNA + S-adenosyl-L-homocysteine + H(+). Functionally, specifically methylates the uridine in position 2552 of 23S rRNA at the 2'-O position of the ribose in the fully assembled 50S ribosomal subunit. The protein is Ribosomal RNA large subunit methyltransferase E of Polaromonas naphthalenivorans (strain CJ2).